The primary structure comprises 430 residues: Adenylosuccinate synthetase (430 aa).

GTP contacts are provided by residues 13 to 19 and 41 to 43; these read GDEGKGK and GHT. The active-site Proton acceptor is the Asp14. Mg(2+) is bound by residues Asp14 and Gly41. Residues 14–17, 39–42, Thr130, Arg144, Gln225, Thr240, and Arg304 each bind IMP; these read DEGK and NAGH. The active-site Proton donor is His42. 300–306 provides a ligand contact to substrate; the sequence is ASTGRPR. GTP is bound by residues Arg306, 332 to 334, and 414 to 416; these read KLD and STG.

The protein belongs to the adenylosuccinate synthetase family. As to quaternary structure, homodimer. The cofactor is Mg(2+).

The protein localises to the cytoplasm. It catalyses the reaction IMP + L-aspartate + GTP = N(6)-(1,2-dicarboxyethyl)-AMP + GDP + phosphate + 2 H(+). Its pathway is purine metabolism; AMP biosynthesis via de novo pathway; AMP from IMP: step 1/2. Its function is as follows. Plays an important role in the de novo pathway of purine nucleotide biosynthesis. Catalyzes the first committed step in the biosynthesis of AMP from IMP. The sequence is that of Adenylosuccinate synthetase from Xanthomonas oryzae pv. oryzae (strain MAFF 311018).